Consider the following 192-residue polypeptide: E3 ubiquitin-protein ligase RNF185 (192 aa).

Positions 1–13 (MASKGPSASASTE) are enriched in polar residues. A disordered region spans residues 1–30 (MASKGPSASASTENSNAGGPSGSSNGTGES). Residues 1–130 (MASKGPSASA…GGFQGFGFGD (130 aa)) lie on the Cytoplasmic side of the membrane. The segment covering 14–27 (NSNAGGPSGSSNGT) has biased composition (low complexity). Residues 29-80 (ESGGQDSTFECNICLDTAKDAVISLCGHLFCWPCLHQWLETRPNRQVCPVCK) form a required for ubiquitin ligase activity and protection against ER stress-induced cell death region. The RING-type zinc finger occupies 39 to 80 (CNICLDTAKDAVISLCGHLFCWPCLHQWLETRPNRQVCPVCK). The disordered stretch occupies residues 90 to 123 (PLYGRGSTGQQDPREKTPPRPQGQRPEPENRGGF). A helical membrane pass occupies residues 131–151 (GGFQMSFGIGAFPFGIFATAF). At 152 to 171 (NINDGRPPPAVPGTPQYVDE) the chain is on the mitochondrial intermembrane side. Residues 172-192 (QFLSRLFLFVALVIMFWLLIA) traverse the membrane as a helical segment.

As to quaternary structure, interacts with ATG5 and BNIP1. In terms of tissue distribution, ubiquitously expressed with high expression in testis.

The protein localises to the mitochondrion outer membrane. It is found in the endoplasmic reticulum membrane. The catalysed reaction is S-ubiquitinyl-[E2 ubiquitin-conjugating enzyme]-L-cysteine + [acceptor protein]-L-lysine = [E2 ubiquitin-conjugating enzyme]-L-cysteine + N(6)-ubiquitinyl-[acceptor protein]-L-lysine.. It participates in protein modification; protein ubiquitination. In terms of biological role, E3 ubiquitin-protein ligase that regulates selective mitochondrial autophagy by mediating 'Lys-63'-linked polyubiquitination of BNIP1. Acts in the endoplasmic reticulum (ER)-associated degradation (ERAD) pathway, which targets misfolded proteins that accumulate in the endoplasmic reticulum (ER) for ubiquitination and subsequent proteasome-mediated degradation. Protects cells from ER stress-induced apoptosis. Responsible for the cotranslational ubiquitination and degradation of CFTR in the ERAD pathway. Also acts as a regulator of the innate antiviral response by catalyzing 'Lys-27'-linked polyubiquitination of CGAS, thereby promoting CGAS cyclic GMP-AMP synthase activity. Preferentially associates with the E2 enzymes UBE2J1 and UBE2J2. This is E3 ubiquitin-protein ligase RNF185 (Rnf185) from Mus musculus (Mouse).